Here is a 244-residue protein sequence, read N- to C-terminus: Lipoprotein-releasing system ATP-binding protein LolD (244 aa).

Positions 19-244 (IRAEALAKTY…KLRELAPSAV (226 aa)) constitute an ABC transporter domain. 55–62 (GASGAGKS) lines the ATP pocket.

It belongs to the ABC transporter superfamily. Lipoprotein translocase (TC 3.A.1.125) family. The complex is composed of two ATP-binding proteins (LolD) and two transmembrane proteins (LolC and LolE).

Its subcellular location is the cell inner membrane. Part of the ABC transporter complex LolCDE involved in the translocation of mature outer membrane-directed lipoproteins, from the inner membrane to the periplasmic chaperone, LolA. Responsible for the formation of the LolA-lipoprotein complex in an ATP-dependent manner. The sequence is that of Lipoprotein-releasing system ATP-binding protein LolD from Xanthomonas oryzae pv. oryzae (strain MAFF 311018).